The sequence spans 1327 residues: Polarized growth protein L1 (1327 aa).

An N-terminal signal peptide occupies residues 1-30; the sequence is MRESFASLLATGAGKLALSLLFAATPFTSA. Over 31 to 1169 the chain is Extracellular; sequence YTFNQVPSPN…FSQQNGKHLA (1139 aa). N-linked (GlcNAc...) asparagine glycosylation is found at Asn74, Asn90, Asn105, Asn115, Asn132, Asn170, Asn217, Asn224, Asn235, Asn318, Asn342, Asn452, Asn475, Asn601, Asn639, Asn648, and Asn691. Residues 595-641 form a Kelch 1 repeat; it reads NLYVAGNFSNNDGRNNIFSFKQGASDPTALPNRGLNRQVMTLYQNDS. A Kelch 2 repeat occupies 699–754; it reads QVLAVSGFFDSVNEFNGNPSTNVQDFAVWVPSRSNWLHNLDFFTLAMSGRLMTFAD. Residues Asn835, Asn852, Asn877, and Asn931 are each glycosylated (N-linked (GlcNAc...) asparagine). Kelch repeat units follow at residues 945 to 993 and 994 to 1040; these read DVFV…ISDT and QMYI…TIAN. N-linked (GlcNAc...) asparagine glycosylation is found at Asn1000, Asn1006, and Asn1126. Residues 1170–1190 traverse the membrane as a helical segment; it reads LWAIVLIGLAIALVLTFLLVV. Over 1191–1327 the chain is Cytoplasmic; the sequence is AGILLEWYRN…VFDTILACSS (137 aa).

It belongs to the RAX2 family.

It is found in the cell membrane. In terms of biological role, has been identified within the cluster that mediates the biosynthesis of squalestatin, but as its expression does not follow that of the other cluster members and it is not conserved in close related clusters, L1 seems not to be involved in the biosynthesis of squalestatin. Probably plays a role as a cell polarity regulator. The polypeptide is Polarized growth protein L1 (Phoma sp. (strain ATCC 20986 / MF5453)).